Reading from the N-terminus, the 1227-residue chain is JNK-interacting protein 3 (1227 aa).

The tract at residues 1–22 (MMDNDDALLNNGGPQSGAETVY) is disordered. In terms of domain architecture, RH1 spans 25-113 (EDNNMVMSEK…VTQYEREKSA (89 aa)). A coiled-coil region spans residues 84–191 (RINQEQDVEV…TELFKNHVDY (108 aa)). The interval 281-323 (DALQQQHHATSPQSPDSSPVVPNVPTNVGRSTTKKEQRSDNNL) is disordered. Over residues 290–308 (TSPQSPDSSPVVPNVPTNV) the composition is skewed to low complexity. Residues 363–489 (GKEVENLIME…EAVRLTEILR (127 aa)) adopt a coiled-coil conformation. The RH2 domain occupies 453 to 524 (RKRFTRVEMA…PSNRPTERVA (72 aa)). 3 disordered regions span residues 517–572 (NRPT…HPAS), 804–851 (GKVE…AEEP), and 863–889 (PLPG…SSSN). The span at 526–540 (GLGGGPMFRHTGGGS) shows a compositional bias: gly residues. Over residues 541 to 550 (PAHSHGSPSR) the composition is skewed to low complexity. The span at 807 to 817 (EFVRVKPKSDD) shows a compositional bias: basic and acidic residues. The stretch at 814 to 849 (KSDDEQNSNEKQQQEEEEAKEATEKSNEQLPAVSAE) forms a coiled coil. Over residues 879–889 (NNNNNSSSSSN) the composition is skewed to low complexity.

This sequence belongs to the JIP scaffold family. In terms of assembly, forms homo- and heterooligomeric complexes. Binds the TPR motif-containing C-terminal of kinesin light chain, Klc. Pre-assembled syd scaffolding complexes are then transported as a cargo of kinesin, to the required subcellular location.

The protein resides in the cytoplasm. In terms of biological role, the JNK-interacting protein (JIP) group of scaffold proteins selectively mediates JNK-signaling by aggregating specific components of the MAPK cascade to form a functional JNK signaling module. May function as a regulator of vesicle transport, through interactions with the JNK-signaling components and motor proteins. Syd is required for efficient kinesin-I mediated axonal transport. This is JNK-interacting protein 3 (syd) from Drosophila melanogaster (Fruit fly).